A 319-amino-acid chain; its full sequence is Cell surface A33 antigen (319 aa).

An N-terminal signal peptide occupies residues 1 to 21 (MVGKMWPVLWTLCAVRVTVDA). The Ig-like V-type domain maps to 22-134 (ISVETPQDVL…LEGNTKSRVR (113 aa)). Residues 22–235 (ISVETPQDVL…VAVRSPSMNV (214 aa)) lie on the Extracellular side of the membrane. Disulfide bonds link cysteine 43/cysteine 117, cysteine 146/cysteine 222, and cysteine 162/cysteine 211. N-linked (GlcNAc...) asparagine glycans are attached at residues asparagine 112, asparagine 200, and asparagine 223. Positions 140-227 (PPSKPECGIE…GTQFCNITVA (88 aa)) constitute an Ig-like C2-type domain. The chain crosses the membrane as a helical span at residues 236 to 256 (ALYVGIAVGVVAALIIIGIII). At 257 to 319 (YCCCCRGKDD…GRESPDHLDQ (63 aa)) the chain is on the cytoplasmic side. Basic and acidic residues-rich tracts occupy residues 267-295 (NTEDKEDARPNREAYEEPPEQLRELSRER) and 303-319 (QEEQRSTGRESPDHLDQ). The segment at 267-319 (NTEDKEDARPNREAYEEPPEQLRELSREREEEDDYRQEEQRSTGRESPDHLDQ) is disordered.

N-glycosylated, contains approximately 8 kDa of N-linked carbohydrate. Post-translationally, palmitoylated. Expressed in normal gastrointestinal epithelium and in 95% of colon cancers.

Its subcellular location is the membrane. Functionally, may play a role in cell-cell recognition and signaling. The protein is Cell surface A33 antigen (GPA33) of Homo sapiens (Human).